The following is a 116-amino-acid chain: Large ribosomal subunit protein bL20 (116 aa).

Belongs to the bacterial ribosomal protein bL20 family.

In terms of biological role, binds directly to 23S ribosomal RNA and is necessary for the in vitro assembly process of the 50S ribosomal subunit. It is not involved in the protein synthesizing functions of that subunit. This chain is Large ribosomal subunit protein bL20, found in Desulforapulum autotrophicum (strain ATCC 43914 / DSM 3382 / VKM B-1955 / HRM2) (Desulfobacterium autotrophicum).